Reading from the N-terminus, the 473-residue chain is Photosystem II CP43 reaction center protein (473 aa).

Residues 1 to 14 (MKTLYSLRRFYHVE) constitute a propeptide that is removed on maturation. Thr15 is modified (N-acetylthreonine). Thr15 is subject to Phosphothreonine. 5 helical membrane-spanning segments follow: residues 69–93 (LFEV…PHLA), 134–155 (LLGP…KDRN), 178–200 (KALY…RKIT), 255–275 (KPFA…LSYS), and 291–312 (CFNN…ASQA). Glu367 serves as a coordination point for [CaMn4O5] cluster. A helical membrane pass occupies residues 447–471 (RARAAAAGFEKGIDRDFEPVLSMTP).

Belongs to the PsbB/PsbC family. PsbC subfamily. PSII is composed of 1 copy each of membrane proteins PsbA, PsbB, PsbC, PsbD, PsbE, PsbF, PsbH, PsbI, PsbJ, PsbK, PsbL, PsbM, PsbT, PsbX, PsbY, PsbZ, Psb30/Ycf12, at least 3 peripheral proteins of the oxygen-evolving complex and a large number of cofactors. It forms dimeric complexes. It depends on Binds multiple chlorophylls and provides some of the ligands for the Ca-4Mn-5O cluster of the oxygen-evolving complex. It may also provide a ligand for a Cl- that is required for oxygen evolution. PSII binds additional chlorophylls, carotenoids and specific lipids. as a cofactor.

It localises to the plastid. Its subcellular location is the chloroplast thylakoid membrane. One of the components of the core complex of photosystem II (PSII). It binds chlorophyll and helps catalyze the primary light-induced photochemical processes of PSII. PSII is a light-driven water:plastoquinone oxidoreductase, using light energy to abstract electrons from H(2)O, generating O(2) and a proton gradient subsequently used for ATP formation. The polypeptide is Photosystem II CP43 reaction center protein (Jasminum nudiflorum (Winter jasmine)).